Here is a 1112-residue protein sequence, read N- to C-terminus: Electrogenic sodium bicarbonate cotransporter 4 (1112 aa).

Residues 1 to 13 (MKVEEKAGVKKLE) show a composition bias toward basic and acidic residues. Disordered regions lie at residues 1-80 (MKVE…SSLG), 220-255 (KKPI…HHST), and 439-469 (GRSG…NEAE). The Cytoplasmic segment spans residues 1–513 (MKVEEKAGVK…DFYDGFHIQS (513 aa)). Composition is skewed to polar residues over residues 53-67 (QRVQ…SQQD) and 233-244 (SVSTTNRSSARS). Positions 444 to 465 (SAGGGGSGGGAGGSGAGGGGSG) are enriched in gly residues. A helical membrane pass occupies residues 514–536 (ISAVLFIYLGCITNAITFGGLLG). At 537–547 (DATDNYQGVME) the chain is on the extracellular side. The helical transmembrane segment at 548–579 (SFLGTAMAGSLFCLFSGQPLIILSSTGPILIF) threads the bilayer. Residues 580 to 598 (EKLLFDFSKANGLDYMEFR) lie on the Cytoplasmic side of the membrane. The chain crosses the membrane as a helical span at residues 599–620 (LWIGLHSAIQCLILVATDASFI). Topologically, residues 621-734 (IKYITRFTEE…LGSSCQFVPD (114 aa)) are extracellular. The chain crosses the membrane as a helical span at residues 735–753 (LALMSFILFFGTYSMTLTL). Residues 754–772 (KKFKFSRYFPTKVRTLVAD) lie on the Cytoplasmic side of the membrane. Residues 773–792 (FSIVFSILLFCGIDACFGLQ) traverse the membrane as a helical segment. The Extracellular portion of the chain corresponds to 793–820 (TPKLHVPNVIKPTRPDRGWFVAPFGKNP). The helical transmembrane segment at 821-839 (WWVYPASILPALLVTILIF) threads the bilayer. Residues 840 to 858 (MDQQITAVIVNRKENKLRK) lie on the Cytoplasmic side of the membrane. The helical transmembrane segment at 859-875 (AAGYHLDLFWVGILMAL) threads the bilayer. Over 876–880 (CSFMG) the chain is Extracellular. Residues 881–900 (LPWYVAATVISIAHIDSLKM) traverse the membrane as a helical segment. Residues 901–920 (ETETSAPGEQPQFLGVREQR) are Cytoplasmic-facing. A helical transmembrane segment spans residues 921-940 (VTGVMVFILTGISVFLAPIL). Residues 941-945 (KYIPM) lie on the Extracellular side of the membrane. The chain crosses the membrane as a helical span at residues 946–966 (PVLYGVFLYMGVASLNGIQFW). Residues 967-992 (DRCKLFLMPAKHQPDHAFLRHVPLRR) are Cytoplasmic-facing. The helical transmembrane segment at 993–1010 (IHLFTLVQILCLALLWIL) threads the bilayer. The Extracellular segment spans residues 1011–1015 (KSTMA). A helical transmembrane segment spans residues 1016–1033 (AIIFPVMILGLIIVRRLL). Residues 1034 to 1112 (DLIFSQHDLA…KRSSSWSHSL (79 aa)) lie on the Cytoplasmic side of the membrane. The segment covering 1055-1074 (KESDRKKRRKEVHENTDKEP) has biased composition (basic and acidic residues). The disordered stretch occupies residues 1055–1112 (KESDRKKRRKEVHENTDKEPQFLPPSVVKIPMEGIPSDPQNGIHCVGRKRSSSWSHSL).

The protein belongs to the anion exchanger (TC 2.A.31) family. As to expression, observed in hepatocytes and in the apical region of bile duct intrahepatic cholangiocytes of liver. Also observed in uroepithelium cells lining the outer pelvic wall of the kidney (at protein level). Highly expressed in colon, distal colon, liver, kidney and testis. Moderate expression in duodenum and stomach and weak expression in heart. In kidney, very weakly expressed in the inner medulla, but abundantly expressed in cortex and outer medulla in the medullary thick ascending and cortical thick ascending limbs of the loop of Henle.

It is found in the basolateral cell membrane. It localises to the apical cell membrane. The enzyme catalyses 2 hydrogencarbonate(out) + Na(+)(out) = 2 hydrogencarbonate(in) + Na(+)(in). It carries out the reaction 3 hydrogencarbonate(out) + Na(+)(out) = 3 hydrogencarbonate(in) + Na(+)(in). Functionally, mediates sodium- and bicarbonate-dependent electrogenic sodium bicarbonate cotransport, with a Na(+):HCO3(-) stoichiometry varying from 1:2 to 1:3. This Rattus norvegicus (Rat) protein is Electrogenic sodium bicarbonate cotransporter 4.